The sequence spans 464 residues: Protein FAM90A22 (464 aa).

Disordered regions lie at residues 1–43, 70–389, and 415–437; these read MMAR…PRLK, PATL…HDGA, and HSPE…SEAP. Composition is skewed to basic and acidic residues over residues 74 to 89 and 97 to 114; these read GKKE…KPRA and NKDK…DPQR. Low complexity predominate over residues 182–197; that stretch reads SLSPLRKTSLSSSSSL.

Belongs to the FAM90 family.

This is Protein FAM90A22 from Homo sapiens (Human).